The sequence spans 342 residues: Small ribosomal subunit protein uS2 (342 aa).

The disordered stretch occupies residues 235–283 (EENAPFEQDEPRKPSQKPKQNRPENKPRFDKQAPRAAAKPEVKAEVKPE). Residues 255 to 283 (NRPENKPRFDKQAPRAAAKPEVKAEVKPE) show a composition bias toward basic and acidic residues.

The protein belongs to the universal ribosomal protein uS2 family.

This chain is Small ribosomal subunit protein uS2, found in Acholeplasma laidlawii (strain PG-8A).